Here is a 418-residue protein sequence, read N- to C-terminus: Exodeoxyribonuclease 7 large subunit (418 aa).

It belongs to the XseA family. As to quaternary structure, heterooligomer composed of large and small subunits.

Its subcellular location is the cytoplasm. The enzyme catalyses Exonucleolytic cleavage in either 5'- to 3'- or 3'- to 5'-direction to yield nucleoside 5'-phosphates.. Bidirectionally degrades single-stranded DNA into large acid-insoluble oligonucleotides, which are then degraded further into small acid-soluble oligonucleotides. This is Exodeoxyribonuclease 7 large subunit from Acaryochloris marina (strain MBIC 11017).